A 71-amino-acid polypeptide reads, in one-letter code: MAHLPRVCPFIRRLRVALLCLRPGHRFAHSEPQRQRPASALEMAVGIVVIFSAFLTPSAYVLSNLSQFRRE.

A mitochondrion-targeting transit peptide spans 1–28 (MAHLPRVCPFIRRLRVALLCLRPGHRFA). Residues 29–39 (HSEPQRQRPAS) are Mitochondrial matrix-facing. Residues 40–63 (ALEMAVGIVVIFSAFLTPSAYVLS) traverse the membrane as a helical segment. Residues 64–71 (NLSQFRRE) lie on the Mitochondrial intermembrane side of the membrane.

The protein belongs to the cytochrome c oxidase VIII family. Component of the cytochrome c oxidase (complex IV, CIV), a multisubunit enzyme composed of 14 subunits. The complex is composed of a catalytic core of 3 subunits MT-CO1, MT-CO2 and MT-CO3, encoded in the mitochondrial DNA, and 11 supernumerary subunits COX4I, COX5A, COX5B, COX6A, COX6B, COX6C, COX7A, COX7B, COX7C, COX8 and NDUFA4, which are encoded in the nuclear genome. The complex exists as a monomer or a dimer and forms supercomplexes (SCs) in the inner mitochondrial membrane with NADH-ubiquinone oxidoreductase (complex I, CI) and ubiquinol-cytochrome c oxidoreductase (cytochrome b-c1 complex, complex III, CIII), resulting in different assemblies (supercomplex SCI(1)III(2)IV(1) and megacomplex MCI(2)III(2)IV(2)).

It is found in the mitochondrion inner membrane. It functions in the pathway energy metabolism; oxidative phosphorylation. Component of the cytochrome c oxidase, the last enzyme in the mitochondrial electron transport chain which drives oxidative phosphorylation. The respiratory chain contains 3 multisubunit complexes succinate dehydrogenase (complex II, CII), ubiquinol-cytochrome c oxidoreductase (cytochrome b-c1 complex, complex III, CIII) and cytochrome c oxidase (complex IV, CIV), that cooperate to transfer electrons derived from NADH and succinate to molecular oxygen, creating an electrochemical gradient over the inner membrane that drives transmembrane transport and the ATP synthase. Cytochrome c oxidase is the component of the respiratory chain that catalyzes the reduction of oxygen to water. Electrons originating from reduced cytochrome c in the intermembrane space (IMS) are transferred via the dinuclear copper A center (CU(A)) of subunit 2 and heme A of subunit 1 to the active site in subunit 1, a binuclear center (BNC) formed by heme A3 and copper B (CU(B)). The BNC reduces molecular oxygen to 2 water molecules using 4 electrons from cytochrome c in the IMS and 4 protons from the mitochondrial matrix. In Eulemur fulvus fulvus (Brown lemur), this protein is Cytochrome c oxidase subunit 8C, mitochondrial (COX8C).